The following is a 493-amino-acid chain: 1-aminocyclopropane-1-carboxylate synthase 1 (493 aa).

Lys279 carries the N6-(pyridoxal phosphate)lysine modification.

Belongs to the class-I pyridoxal-phosphate-dependent aminotransferase family. Homodimer. Requires pyridoxal 5'-phosphate as cofactor.

The enzyme catalyses S-adenosyl-L-methionine = 1-aminocyclopropane-1-carboxylate + S-methyl-5'-thioadenosine + H(+). Its pathway is alkene biosynthesis; ethylene biosynthesis via S-adenosyl-L-methionine; ethylene from S-adenosyl-L-methionine: step 1/2. Its function is as follows. Catalyzes the formation of 1-aminocyclopropane-1-carboxylate, a direct precursor of ethylene in higher plants. This is 1-aminocyclopropane-1-carboxylate synthase 1 (ACC1A) from Cucurbita pepo (Vegetable marrow).